The following is a 509-amino-acid chain: Galactose-1-phosphate uridylyltransferase (509 aa).

This sequence belongs to the galactose-1-phosphate uridylyltransferase type 2 family.

Its subcellular location is the cytoplasm. It carries out the reaction alpha-D-galactose 1-phosphate + UDP-alpha-D-glucose = alpha-D-glucose 1-phosphate + UDP-alpha-D-galactose. It participates in carbohydrate metabolism; galactose metabolism. This chain is Galactose-1-phosphate uridylyltransferase, found in Fusobacterium nucleatum subsp. nucleatum (strain ATCC 25586 / DSM 15643 / BCRC 10681 / CIP 101130 / JCM 8532 / KCTC 2640 / LMG 13131 / VPI 4355).